We begin with the raw amino-acid sequence, 43 residues long: Peroxidase (43 aa).

This sequence belongs to the peroxidase family. Classical plant (class III) peroxidase subfamily. Requires Ca(2+) as cofactor. The cofactor is heme b.

It catalyses the reaction 2 a phenolic donor + H2O2 = 2 a phenolic radical donor + 2 H2O. Its function is as follows. Removal of H(2)O(2), oxidation of toxic reductants, biosynthesis and degradation of lignin, suberization, auxin catabolism, response to environmental stresses such as wounding, pathogen attack and oxidative stress. These functions might be dependent on each isozyme/isoform in each plant tissue. This is Peroxidase from Cynara cardunculus var. scolymus (Globe artichoke).